Reading from the N-terminus, the 1205-residue chain is Plasma membrane calcium-transporting ATPase 1 (1205 aa).

The Cytoplasmic portion of the chain corresponds to 2 to 104 (GDMANNSVAY…KTFLQLVWEA (103 aa)). The calmodulin-binding subdomain A stretch occupies residues 94–111 (PKTFLQLVWEALQDVTLI). Residues 105-125 (LQDVTLIILEIAAVVSLGLSF) traverse the membrane as a helical segment. The Extracellular segment spans residues 126–153 (YQPPGGNEALCGSVNVGEEEEESEAGWI). The chain crosses the membrane as a helical span at residues 154 to 174 (EGAAILLSVVCVVLVTAFNDW). The Cytoplasmic portion of the chain corresponds to 175 to 351 (SKEKQFRGLQ…KEKSVLQGKL (177 aa)). Residues 296 to 343 (EEEKEKEKKDKKTKAQDGAAMEMQPLKSEDGVDGDEKDKKRSNLPKKE) are disordered. Composition is skewed to basic and acidic residues over residues 300 to 310 (EKEKKDKKTKA) and 322 to 343 (KSED…PKKE). Residues 352–371 (TKLAVQIGKAGLLMSAITVI) traverse the membrane as a helical segment. Residues 372 to 403 (ILVLYFVIDTSWVQKRPWLAECTPIYIQYFVK) lie on the Extracellular side of the membrane. The chain crosses the membrane as a helical span at residues 404–424 (FFIIGVTVLVVAVPEGLPLAV). The Cytoplasmic segment spans residues 425–840 (TISLAYSVKK…RNVYDSISKF (416 aa)). The active-site 4-aspartylphosphate intermediate is the Asp460. The Mg(2+) site is built by Asp460, Thr462, and Asp782. Residues 841–861 (LQFQLTVNVVAVIVAFTGACI) traverse the membrane as a helical segment. Residues 862-868 (TQDSPLK) lie on the Extracellular side of the membrane. The chain crosses the membrane as a helical span at residues 869 to 889 (AVQMLWVNLIMDTLASLALAT). The Cytoplasmic segment spans residues 890–912 (EPPTEALLLRKPYGRNKPLISRT). The helical transmembrane segment at 913–933 (MMKNILGHAFYQLVVVFTLLF) threads the bilayer. Over 934–956 (AGEKIFDIDSGRNAPLHAPPSEH) the chain is Extracellular. A helical membrane pass occupies residues 957 to 976 (YTIVFNTFVMMQLFNEINAR). At 977-990 (KIHGERNVFEGIFN) the chain is on the cytoplasmic side. Residues 991–1012 (NAIFCTIVLGTFVVQIIIVQFG) traverse the membrane as a helical segment. The Extracellular portion of the chain corresponds to 1013–1024 (GKPFSCSKLSIE). The chain crosses the membrane as a helical span at residues 1025-1045 (QWLWSVFLGMGTLLWGQLIST). The Cytoplasmic segment spans residues 1046–1205 (IPTSRLKFLK…SPLHSLETSL (160 aa)). Thr1101 carries the phosphothreonine; by PKC modification. Positions 1145-1205 (PLIDDTDAED…SPLHSLETSL (61 aa)) are disordered. Residues 1183 to 1205 (TDMNKSATSSSPGSPLHSLETSL) show a composition bias toward polar residues.

Belongs to the cation transport ATPase (P-type) (TC 3.A.3) family. Type IIB subfamily.

It localises to the cell membrane. The catalysed reaction is Ca(2+)(in) + ATP + H2O = Ca(2+)(out) + ADP + phosphate + H(+). Functionally, catalyzes the hydrolysis of ATP coupled with the transport of calcium from the cytoplasm to the extracellular space thereby maintaining intracellular calcium homeostasis. The polypeptide is Plasma membrane calcium-transporting ATPase 1 (Gallus gallus (Chicken)).